The sequence spans 296 residues: Phosphatidylglycerol--prolipoprotein diacylglyceryl transferase (296 aa).

The next 7 helical transmembrane spans lie at 17-37, 59-79, 97-117, 129-149, 203-223, 230-250, and 265-285; these read LAVRWYGLMYLVGFIAAIVVG, MMFYGVLGTVLGGRLGYVLFY, GGMSFHGGFLGVTLAMVLFAW, FVAPMVPAGLAAGRLGNFING, PSQLYEIALEGIALFFVLFFF, LGAVSALFLIGYGLARFTVEF, and LSMGQWLSLPMILAGIALLVW. An a 1,2-diacyl-sn-glycero-3-phospho-(1'-sn-glycerol)-binding site is contributed by R142.

Belongs to the Lgt family.

The protein localises to the cell inner membrane. It carries out the reaction L-cysteinyl-[prolipoprotein] + a 1,2-diacyl-sn-glycero-3-phospho-(1'-sn-glycerol) = an S-1,2-diacyl-sn-glyceryl-L-cysteinyl-[prolipoprotein] + sn-glycerol 1-phosphate + H(+). It participates in protein modification; lipoprotein biosynthesis (diacylglyceryl transfer). Catalyzes the transfer of the diacylglyceryl group from phosphatidylglycerol to the sulfhydryl group of the N-terminal cysteine of a prolipoprotein, the first step in the formation of mature lipoproteins. This Burkholderia ambifaria (strain MC40-6) protein is Phosphatidylglycerol--prolipoprotein diacylglyceryl transferase.